A 481-amino-acid polypeptide reads, in one-letter code: uncharacterized protein (481 aa).

Transmembrane regions (helical) follow at residues 32–52, 82–102, 137–157, 173–193, 204–224, 258–278, 289–309, 348–368, 392–412, and 418–438; these read LSWL…YWGV, FFHW…IMAY, MFLI…AATF, VQAF…WIGI, VGWG…TEFI, WTVF…MFVT, VIWG…GVME, LFLA…MDAV, LFWC…GASL, and TVVL…GGFI.

Belongs to the BCCT transporter (TC 2.A.15) family.

Its subcellular location is the cell inner membrane. Probable transporter whose substrate is unknown. Is not involved in aerobic D-malate transport. This is an uncharacterized protein from Escherichia coli (strain K12).